A 154-amino-acid polypeptide reads, in one-letter code: Protein SprT-like (154 aa).

In terms of domain architecture, SprT-like spans L6–F144. Zn(2+) is bound at residue H67. E68 is a catalytic residue. H71 is a binding site for Zn(2+).

The protein belongs to the SprT family. The cofactor is Zn(2+).

It localises to the cytoplasm. This is Protein SprT-like from Shouchella clausii (strain KSM-K16) (Alkalihalobacillus clausii).